Reading from the N-terminus, the 876-residue chain is Valine--tRNA ligase (876 aa).

Positions 43–53 match the 'HIGH' region motif; that stretch reads PNVTGVLHMGH. The 'KMSKS' region signature appears at 533–537; it reads KMSKS. Position 536 (lysine 536) interacts with ATP. Positions 804-876 form a coiled coil; sequence GALIDVEEEI…DSLNQLQSTK (73 aa).

Belongs to the class-I aminoacyl-tRNA synthetase family. ValS type 1 subfamily. Monomer.

Its subcellular location is the cytoplasm. The enzyme catalyses tRNA(Val) + L-valine + ATP = L-valyl-tRNA(Val) + AMP + diphosphate. Functionally, catalyzes the attachment of valine to tRNA(Val). As ValRS can inadvertently accommodate and process structurally similar amino acids such as threonine, to avoid such errors, it has a 'posttransfer' editing activity that hydrolyzes mischarged Thr-tRNA(Val) in a tRNA-dependent manner. This is Valine--tRNA ligase from Porphyromonas gingivalis (strain ATCC 33277 / DSM 20709 / CIP 103683 / JCM 12257 / NCTC 11834 / 2561).